The chain runs to 379 residues: Sialidase-2 (379 aa).

The FRIP motif signature appears at 20-23 (YRIP). Substrate-binding residues include arginine 21 and arginine 41. The active-site Proton acceptor is aspartate 46. The BNR 1 repeat unit spans residues 127–138 (VSSTDHGRTWSP). Residues tyrosine 179 and tyrosine 181 each coordinate substrate. The stretch at 197 to 208 (FISLDHGHTWKL) is one BNR 2 repeat. Residues glutamate 218, arginine 237, and arginine 303 each coordinate substrate. Arginine 303 is an active-site residue. Residue tyrosine 333 is the Nucleophile of the active site. Residue glutamate 354 is part of the active site.

The protein belongs to the glycosyl hydrolase 33 family. In terms of tissue distribution, highly expressed in heart.

It is found in the cytoplasm. The protein resides in the cytosol. The enzyme catalyses Hydrolysis of alpha-(2-&gt;3)-, alpha-(2-&gt;6)-, alpha-(2-&gt;8)- glycosidic linkages of terminal sialic acid residues in oligosaccharides, glycoproteins, glycolipids, colominic acid and synthetic substrates.. It catalyses the reaction a ganglioside GD1a + H2O = a ganglioside GM1 + N-acetylneuraminate. It carries out the reaction a ganglioside GM1 + H2O = a ganglioside GA1 + N-acetylneuraminate. The catalysed reaction is a ganglioside GT1b + H2O = a ganglioside GD1b + N-acetylneuraminate. The enzyme catalyses a ganglioside GD1b + H2O = a ganglioside GM1 + N-acetylneuraminate. It catalyses the reaction a ganglioside GD3 + H2O = a ganglioside GM3 + N-acetylneuraminate. It carries out the reaction a ganglioside GM3 + H2O = a beta-D-galactosyl-(1-&gt;4)-beta-D-glucosyl-(1&lt;-&gt;1)-ceramide + N-acetylneuraminate. The catalysed reaction is a ganglioside GM2 + H2O = a ganglioside GA2 + N-acetylneuraminate. The enzyme catalyses a neolactoside IV(3)-alpha-NeuAc-nLc4Cer(d18:1(4E)) + H2O = a neolactoside nLc4Cer(d18:1(4E)) + N-acetylneuraminate. It catalyses the reaction N-acetyl-alpha-neuraminosyl-(2-&gt;3)-beta-D-galactosyl-(1-&gt;4)-D-glucose + H2O = lactose + N-acetylneuraminate. Its function is as follows. Exo-alpha-sialidase that catalyzes the hydrolytic cleavage of the terminal sialic acid (N-acetylneuraminic acid, Neu5Ac) of a glycan moiety in the catabolism of glycolipids, glycoproteins and oligosacharides. Recognizes sialyl linkage positions of the glycan moiety as well as the supramolecular organization of the sialoglycoconjugate. Displays preference for alpha-(2-&gt;3)-sialylated GD1a and GT1B gangliosides over alpha-(2-&gt;8)-sialylated GD1b, in both monomeric forms and micelles. Hydrolyzes exclusively monomeric GM1 ganglioside, but has no activity toward the miscellar form. Has lower sialidase activity for glycoproteins such as fetuin and TF/transferrin that carry a mixture of alpha-(2-&gt;3) and alpha-(2-&gt;6)-sialyl linkages. Cleaves milk oligosaccharide alpha-(2-&gt;3)-sialyllactose, but is inactive toward isomer alpha-(2-&gt;6)-sialyllactose isomer. Has no activity toward colominic acid, a homomer of alpha-(2-&gt;8)-linked Neu5Ac residues. The polypeptide is Sialidase-2 (Neu2) (Mus musculus (Mouse)).